Consider the following 206-residue polypeptide: Endoplasmic reticulum transmembrane protein YET-like (206 aa).

The Lumenal segment spans residues 1–2; that stretch reads ME. A helical membrane pass occupies residues 3–23; sequence FLMTLVFLVLLVEIVFCTFFM. Residues 24–46 are Cytoplasmic-facing; that stretch reads LPVSMHLRKNVYNKLDKLFGGQN. Residues 47–67 form a helical membrane-spanning segment; sequence AKIFLKVLALLVIIVFCDSIV. The Lumenal segment spans residues 68 to 101; the sequence is NSYNINKKLHTPELTGAKFDRQNEYTRMFRYQRN. Residues 102-122 form a helical membrane-spanning segment; it reads SYICGFCLYLFFLIYRSQGII. Residues 123–206 lie on the Cytoplasmic side of the membrane; that stretch reads SQLSNVEASK…KKPKTQKKDD (84 aa). Residues 140 to 198 adopt a coiled-coil conformation; the sequence is KNNLNTVETLLSENEKLKTEIKDLKKMEKEHKAMKSQAENTTKEYLKLQEEYNQLLGKK. The Di-lysine motif signature appears at 203-206; the sequence is KKDD.

The protein belongs to the BCAP29/BCAP31 family.

It localises to the endoplasmic reticulum membrane. May play a role in anterograde transport of membrane proteins from the endoplasmic reticulum to the Golgi. The chain is Endoplasmic reticulum transmembrane protein YET-like from Dictyostelium discoideum (Social amoeba).